The sequence spans 536 residues: Chaperonin GroEL (536 aa).

ATP-binding positions include T29–P32, D86–T90, G412, and D493.

It belongs to the chaperonin (HSP60) family. Forms a cylinder of 14 subunits composed of two heptameric rings stacked back-to-back. Interacts with the co-chaperonin GroES.

The protein localises to the cytoplasm. The catalysed reaction is ATP + H2O + a folded polypeptide = ADP + phosphate + an unfolded polypeptide.. Together with its co-chaperonin GroES, plays an essential role in assisting protein folding. The GroEL-GroES system forms a nano-cage that allows encapsulation of the non-native substrate proteins and provides a physical environment optimized to promote and accelerate protein folding. The polypeptide is Chaperonin GroEL (Onion yellows phytoplasma (strain OY-M)).